An 85-amino-acid polypeptide reads, in one-letter code: UPF0335 protein BH15140 (85 aa).

Belongs to the UPF0335 family.

This Bartonella henselae (strain ATCC 49882 / DSM 28221 / CCUG 30454 / Houston 1) (Rochalimaea henselae) protein is UPF0335 protein BH15140.